An 882-amino-acid polypeptide reads, in one-letter code: Pyruvate dehydrogenase E1 component (882 aa).

As to quaternary structure, homodimer. Part of the PDH complex, consisting of multiple copies of pyruvate dehydrogenase (E1), dihydrolipoamide acetyltransferase (E2) and lipoamide dehydrogenase (E3). Requires thiamine diphosphate as cofactor.

It catalyses the reaction N(6)-[(R)-lipoyl]-L-lysyl-[protein] + pyruvate + H(+) = N(6)-[(R)-S(8)-acetyldihydrolipoyl]-L-lysyl-[protein] + CO2. Component of the pyruvate dehydrogenase (PDH) complex, that catalyzes the overall conversion of pyruvate to acetyl-CoA and CO(2). In Pseudomonas aeruginosa (strain ATCC 15692 / DSM 22644 / CIP 104116 / JCM 14847 / LMG 12228 / 1C / PRS 101 / PAO1), this protein is Pyruvate dehydrogenase E1 component (aceE).